Consider the following 57-residue polypeptide: UPF0391 membrane protein bsl5717 (57 aa).

2 consecutive transmembrane segments (helical) span residues 6-26 and 35-55; these read WALI…TGIS and FLFY…LTIF.

This sequence belongs to the UPF0391 family.

The protein localises to the cell membrane. The sequence is that of UPF0391 membrane protein bsl5717 from Bradyrhizobium diazoefficiens (strain JCM 10833 / BCRC 13528 / IAM 13628 / NBRC 14792 / USDA 110).